Consider the following 67-residue polypeptide: DNA-directed RNA polymerases I, II, and III subunit RPABC5 (67 aa).

Zn(2+) is bound by residues Cys7, Cys10, Cys44, and Cys45.

Belongs to the archaeal Rpo10/eukaryotic RPB10 RNA polymerase subunit family. In terms of assembly, component of the RNA polymerase I (Pol I), RNA polymerase II (Pol II) and RNA polymerase III (Pol III) complexes consisting of at least 13, 12 and 17 subunits, respectively. Pol I complex consists of a ten-subunit catalytic core composed of POLR1A/RPA1, POLR1B/RPA2, POLR1C/RPAC1, POLR1D/RPAC2, POLR1H/RPA12, POLR2E/RPABC1, POLR2F/RPABC2, POLR2H/RPABC3, POLR2K/RPABC4 and POLR2L/RPABC5; a mobile stalk subunit POLR1F/RPA43 protruding from the core and additional subunits homologous to general transcription factors POLR1E/RPA49 and POLR1G/RPA34. Part of Pol I pre-initiation complex (PIC), in which Pol I core assembles with RRN3 and promoter-bound UTBF and SL1/TIF-IB complex. Pol II complex contains a ten-subunit catalytic core composed of POLR2A/RPB1, POLR2B/RPB2, POLR2C/RPB3, POLR2I/RPB9, POLR2J/RPB11, POLR2E/RPABC1, POLR2F/RPABC2, POLR2H/RPABC3, POLR2K/RPABC4 and POLR2L/RPABC5 and a mobile stalk composed of two subunits POLR2D/RPB4 and POLR2G/RPB7. Part of Pol II(G) complex, in which Pol II core associates with an additional subunit POLR2M; unlike conventional Pol II, Pol II(G) functions as a transcriptional repressor. Part of TBP-based Pol II pre-initiation complex (PIC), in which Pol II core assembles with general transcription factors and other specific initiation factors including GTF2E1, GTF2E2, GTF2F1, GTF2F2, TCEA1, ERCC2, ERCC3, GTF2H2, GTF2H3, GTF2H4, GTF2H5, GTF2A1, GTF2A2, GTF2B and TBP; this large multi-subunit PIC complex mediates DNA unwinding and targets Pol II core to the transcription start site where the first phosphodiester bond forms. Pol III complex consists of a ten-subunit catalytic core composed of POLR3A/RPC1, POLR3B/RPC2, POLR1C/RPAC1, POLR1D/RPAC2, POLR3K/RPC10, POLR2E/RPABC1, POLR2F/RPABC2, POLR2H/RPABC3, POLR2K/RPABC4 and POLR2L/RPABC5; a mobile stalk composed of two subunits POLR3H/RPC8 and CRCP/RPC9, protruding from the core and functioning primarily in transcription initiation; and additional subunits homologous to general transcription factors of the RNA polymerase II machinery, POLR3C/RPC3-POLR3F/RPC6-POLR3G/RPC7 heterotrimer required for transcription initiation and POLR3D/RPC4-POLR3E/RPC5 heterodimer involved in both transcription initiation and termination.

The protein localises to the nucleus. It is found in the nucleolus. DNA-dependent RNA polymerase catalyzes the transcription of DNA into RNA using the four ribonucleoside triphosphates as substrates. Common component of RNA polymerases I, II and III which synthesize ribosomal RNA precursors, mRNA precursors and many functional non-coding RNAs, and a small RNAs, such as 5S rRNA and tRNAs, respectively. The protein is DNA-directed RNA polymerases I, II, and III subunit RPABC5 (POLR2L) of Bos taurus (Bovine).